A 689-amino-acid polypeptide reads, in one-letter code: Glycine--tRNA ligase beta subunit (689 aa).

Belongs to the class-II aminoacyl-tRNA synthetase family. As to quaternary structure, tetramer of two alpha and two beta subunits.

The protein resides in the cytoplasm. The catalysed reaction is tRNA(Gly) + glycine + ATP = glycyl-tRNA(Gly) + AMP + diphosphate. The polypeptide is Glycine--tRNA ligase beta subunit (Photobacterium profundum (strain SS9)).